A 2326-amino-acid polypeptide reads, in one-letter code: Telomere-associated protein RIF1 (2326 aa).

Disordered regions lie at residues 381 to 410, 1105 to 1965, and 1993 to 2050; these read QGTPSRVPSNPNSANPPQKPGPYPFASPAT, YTQS…CITP, and VENK…DDSL. A compositionally biased stretch (polar residues) spans 382–396; it reads GTPSRVPSNPNSANP. Composition is skewed to basic and acidic residues over residues 1112 to 1126 and 1150 to 1182; these read SLEKSPLENAKEDFK and CKVDNPLEDVKEKSAYHIEKNSNSEEESSRGDR. A compositionally biased stretch (low complexity) spans 1216 to 1225; the sequence is SAISCSSTSS. 2 stretches are compositionally biased toward polar residues: residues 1233-1242 and 1252-1270; these read QPASRRQSFI and SRPFSPSALNSVSEVSQSA. The span at 1290-1299 shows a compositional bias: basic and acidic residues; that stretch reads KSGEESRKSS. 2 stretches are compositionally biased toward polar residues: residues 1318-1332 and 1341-1353; these read MEQQGNQQAKLVTNS and SFVSNSVENSPES. The segment covering 1376–1402 has biased composition (basic and acidic residues); it reads PDIKKAEAVMAEIEKVRAFEMDSKENT. Polar residues predominate over residues 1403–1412; sequence PPKTAVSSEQ. 3 stretches are compositionally biased toward basic and acidic residues: residues 1448–1480, 1489–1511, and 1519–1539; these read QDKEDGYQKKDKRKEDEKALQKKVPQTKEDASQ, ASEHAIKKESSLPERSAAEDLGS, and GADEEANRSAGKPEDTLKSDS. The span at 1564-1573 shows a compositional bias: polar residues; sequence SSQGLLSSIE. A compositionally biased stretch (basic residues) spans 1586-1595; that stretch reads SLKKKSGKTK. Basic and acidic residues predominate over residues 1596–1609; that stretch reads NKSDSLEGKRKDVQ. Composition is skewed to polar residues over residues 1610-1640 and 1671-1683; these read PESQSHGVSSQVDESKNLSGMNESELSSEVS and RTSPSTQNVSVEQ. Positions 1697–1712 are enriched in basic and acidic residues; the sequence is RVSDEVLKGDENKCIE. A compositionally biased stretch (polar residues) spans 1713–1745; sequence KQSSVEQHSSVQPENVQGANTSGSDLSSLQMQD. A compositionally biased stretch (basic and acidic residues) spans 1776 to 1785; it reads SKSEDPRELI. A compositionally biased stretch (polar residues) spans 1795–1813; that stretch reads AVSTAEVSGSSNLEESLSI. Composition is skewed to basic and acidic residues over residues 1869–1884, 1908–1925, and 1932–1954; these read VEIKVKEEVDGNDRAE, SEEKAAVEKEEESQHGEM, and DGSKPETKQMDELEGNRDGKEEA. The span at 2009-2036 shows a compositional bias: polar residues; sequence SFTSVNGSPSGVQARCTWSPSASPSTSI.

The protein belongs to the RIF1 family. Interacts with TP53BP1 (when phosphorylated by ATM).

The protein localises to the nucleus. The protein resides in the chromosome. It is found in the telomere. It localises to the cytoplasm. Its subcellular location is the cytoskeleton. The protein localises to the spindle. In terms of biological role, key regulator of TP53BP1 that plays a key role in the repair of double-strand DNA breaks (DSBs) in response to DNA damage: acts by promoting non-homologous end joining (NHEJ)-mediated repair of DSBs. In response to DNA damage, interacts with ATM-phosphorylated TP53BP1, allowing recruitment to DNA DSBs. Once recruited to DSBs, RIF1 and TP53BP1 act by promoting NHEJ-mediated repair of DSBs. In the same time, RIF1 and TP53BP1 specifically counteract DSBs resection via homologous recombination (HR) during G1 phase. This is Telomere-associated protein RIF1 from Gallus gallus (Chicken).